Reading from the N-terminus, the 86-residue chain is Large ribosomal subunit protein bL31B (86 aa).

This sequence belongs to the bacterial ribosomal protein bL31 family. Type B subfamily. Part of the 50S ribosomal subunit.

This is Large ribosomal subunit protein bL31B from Erwinia tasmaniensis (strain DSM 17950 / CFBP 7177 / CIP 109463 / NCPPB 4357 / Et1/99).